Reading from the N-terminus, the 189-residue chain is GTP cyclohydrolase 1 (189 aa).

Zn(2+) contacts are provided by Cys79, His82, and Cys150.

The protein belongs to the GTP cyclohydrolase I family. In terms of assembly, toroid-shaped homodecamer, composed of two pentamers of five dimers.

It catalyses the reaction GTP + H2O = 7,8-dihydroneopterin 3'-triphosphate + formate + H(+). It participates in cofactor biosynthesis; 7,8-dihydroneopterin triphosphate biosynthesis; 7,8-dihydroneopterin triphosphate from GTP: step 1/1. The protein is GTP cyclohydrolase 1 of Rickettsia massiliae (strain Mtu5).